Here is a 1543-residue protein sequence, read N- to C-terminus: DNA-directed RNA polymerase subunit beta' (1543 aa).

Zn(2+)-binding residues include C60, C62, C75, and C78. D627, D629, and D631 together coordinate Mg(2+). Zn(2+) is bound by residues C1017, C1097, C1104, and C1107. Disordered stretches follow at residues 1466-1490 (PADR…APPR) and 1522-1543 (AEEG…EENV).

This sequence belongs to the RNA polymerase beta' chain family. As to quaternary structure, the RNAP catalytic core consists of 2 alpha, 1 beta, 1 beta' and 1 omega subunit. When a sigma factor is associated with the core the holoenzyme is formed, which can initiate transcription. Mg(2+) is required as a cofactor. The cofactor is Zn(2+).

The catalysed reaction is RNA(n) + a ribonucleoside 5'-triphosphate = RNA(n+1) + diphosphate. In terms of biological role, DNA-dependent RNA polymerase catalyzes the transcription of DNA into RNA using the four ribonucleoside triphosphates as substrates. The sequence is that of DNA-directed RNA polymerase subunit beta' from Herpetosiphon aurantiacus (strain ATCC 23779 / DSM 785 / 114-95).